Consider the following 610-residue polypeptide: MKNLVSNLRFFSSYSSSIVPRCSNIPKPILNPLYNLLPQSQNPSKIVDVICSTLNHSDYSVLLPNLRDEVKSLIPHLGYPEISRVLLRFQSDASRAITFFKWVKFDLGKRPNVGNYCLLLHILVSSKKFPLAMQFLCELIELTSKKEEVDVFRVLVSATDECNWDPVVFDMLVKGYLKLGLVEEGFRVFREVLDSGFSVSVVTCNHLLNGLLKLDLMEDCWQVYSVMCRVGIHPNTYTFNILTNVFCNDSNFREVDDFLEKMEEEGFEPDLVTYNTLVSSYCRRGRLKEAFYLYKIMYRRRVVPDLVTYTSLIKGLCKDGRVREAHQTFHRMVDRGIKPDCMSYNTLIYAYCKEGMMQQSKKLLHEMLGNSVVPDRFTCKVIVEGFVREGRLLSAVNFVVELRRLKVDIPFEVCDFLIVSLCQEGKPFAAKHLLDRIIEEEGHEAKPETYNNLIESLSRCDAIEEALVLKGKLKNQNQVLDAKTYRALIGCLCRIGRNREAESLMAEMFDSEVKPDSFICGALVYGYCKELDFDKAERLLSLFAMEFRIFDPESYNSLVKAVCETGCGYKKALELQERMQRLGFVPNRLTCKYLIQVLEQPSLPNHLPEN.

PPR repeat units lie at residues 165-199, 200-234, 235-269, 270-304, 305-339, 340-374, 375-409, 410-445, 446-480, 481-515, 516-546, and 551-586; these read DPVV…GFSV, SVVT…GIHP, NTYT…GFEP, DLVT…RVVP, DLVT…GIKP, DCMS…SVVP, DRFT…KVDI, PFEV…GHEA, KPET…NQVL, DAKT…EVKP, DSFI…FAME, and DPES…GFVP.

The protein belongs to the PPR family. P subfamily.

The protein is Pentatricopeptide repeat-containing protein At5g40400 of Arabidopsis thaliana (Mouse-ear cress).